The following is a 551-amino-acid chain: DNA ligase (551 aa).

Glutamate 246 contributes to the ATP binding site. The active-site N6-AMP-lysine intermediate is lysine 248. ATP contacts are provided by arginine 253, arginine 268, glutamate 298, phenylalanine 337, arginine 414, and lysine 420.

This sequence belongs to the ATP-dependent DNA ligase family. Mg(2+) serves as cofactor.

The catalysed reaction is ATP + (deoxyribonucleotide)n-3'-hydroxyl + 5'-phospho-(deoxyribonucleotide)m = (deoxyribonucleotide)n+m + AMP + diphosphate.. Its function is as follows. DNA ligase that seals nicks in double-stranded DNA during DNA replication, DNA recombination and DNA repair. The sequence is that of DNA ligase from Methanobrevibacter smithii (strain ATCC 35061 / DSM 861 / OCM 144 / PS).